The following is a 275-amino-acid chain: Phenylalanine-4-hydroxylase (275 aa).

Fe cation-binding residues include histidine 135, histidine 140, and glutamate 181.

The protein belongs to the biopterin-dependent aromatic amino acid hydroxylase family. The cofactor is Fe(2+).

The catalysed reaction is (6R)-L-erythro-5,6,7,8-tetrahydrobiopterin + L-phenylalanine + O2 = (4aS,6R)-4a-hydroxy-L-erythro-5,6,7,8-tetrahydrobiopterin + L-tyrosine. It functions in the pathway amino-acid degradation; L-phenylalanine degradation; acetoacetate and fumarate from L-phenylalanine: step 1/6. This Mesorhizobium japonicum (strain LMG 29417 / CECT 9101 / MAFF 303099) (Mesorhizobium loti (strain MAFF 303099)) protein is Phenylalanine-4-hydroxylase (phhA).